A 173-amino-acid polypeptide reads, in one-letter code: ATP synthase subunit d, mitochondrial (173 aa).

The transit peptide at 1-23 (MAARSAALKIDWVKVTSSLGLRG) directs the protein to the mitochondrion.

It belongs to the ATPase d subunit family. In terms of assembly, F-type ATPases have 2 components, CF(1) - the catalytic core - and CF(0) - the membrane proton channel. In yeast, the dimeric form of ATP synthase consists of 17 polypeptides: alpha, beta, gamma, delta, epsilon, 4 (B), 5 (OSCP), 6 (A), 8, 9 (C), d, E (Tim11), f, g, h, i/j and k.

The protein localises to the mitochondrion inner membrane. Mitochondrial membrane ATP synthase (F(1)F(0) ATP synthase or Complex V) produces ATP from ADP in the presence of a proton gradient across the membrane which is generated by electron transport complexes of the respiratory chain. F-type ATPases consist of two structural domains, F(1) - containing the extramembraneous catalytic core, and F(0) - containing the membrane proton channel, linked together by a central stalk and a peripheral stalk. During catalysis, ATP synthesis in the catalytic domain of F(1) is coupled via a rotary mechanism of the central stalk subunits to proton translocation. Part of the complex F(0) domain and the peripheric stalk, which acts as a stator to hold the catalytic alpha(3)beta(3) subcomplex and subunit a/ATP6 static relative to the rotary elements. The protein is ATP synthase subunit d, mitochondrial (atp7) of Aspergillus terreus (strain NIH 2624 / FGSC A1156).